The following is an 835-amino-acid chain: uncharacterized protein (835 aa).

This is an uncharacterized protein from Mycoplasma genitalium (strain ATCC 33530 / DSM 19775 / NCTC 10195 / G37) (Mycoplasmoides genitalium).